The primary structure comprises 511 residues: mRNA export factor (511 aa).

A compositionally biased stretch (low complexity) spans Met1–Leu15. The tract at residues Met1 to Ile244 is disordered. Residues Ile5–Asp17 carry the Nuclear export signal motif. 2 positions are modified to phosphoserine; by host: Ser16 and Ser18. Composition is skewed to acidic residues over residues Ser16–Glu26 and Leu35–Glu51. Residues Val104–Arg112 form an interaction with host ALYREF region. The Nuclear localization signal signature appears at Ala110–Arg138. Ser114 carries the phosphoserine; by host modification. Position 138 is a dimethylated arginine; by host (Arg138). The tract at residues Arg138 to Gly152 is RGG-box. Residues Gly139 to Gly149 show a composition bias toward basic residues. Residue Arg148 is modified to Omega-N-methylarginine; by host. Arg150 carries the dimethylated arginine; by host modification. Pro residues predominate over residues Ala213 to Pro232. Zn(2+) contacts are provided by Cys399, His478, Cys482, and Cys487. Residues Cys399 to Cys487 form a CHC2-type zinc finger.

Belongs to the HHV-1 ICP27 protein family. As to quaternary structure, interacts with host RBP1; this interaction facilitates the RNA polymerase recruitment to viral transcription sites. Interacts (via the RGG box) with host ALYREF/THOC4; this interaction recruits ALYREF to viral replication compartments and probably directs viral mRNA to the TAP/NFX1 pathway. Interacts (via the RGG box) with host SRPK1; this interaction relocalizes SRPK1 to the nucleus and seems to alter its activity. Interacts with ICP4; this interaction modulates ICP4 DNA-binding activity. Interacts with host NXF1; this interaction allows efficient export of HSV-1 early and late transcripts. Post-translationally, methylated within the RGG box possibly by host PRMT1. When hypomethylated, ICP27 is exported to the cytoplasm earlier and more rapidly. In terms of processing, phosphorylated.

The protein resides in the host cytoplasm. It is found in the host nucleus. Multifunctional regulator of the expression of viral genes that contributes to the shutoff of host protein synthesis and mediates nuclear export of viral intronless mRNAs. Early in infection, this immediate early (EI) protein mediates the inhibition of cellular splicing. This results in the accumulation of unprocessed 3'end pre-mRNAs which can't be exported from the nucleus. Cellular protein synthesis is thereby shut off early after virus infection. Later in the infection, it helps recruit cellular RNA polymerase II to viral replication sites and promotes the nuclear export of viral intronless mRNAs by interacting with mRNAs and host NXF1/TAP. ICP27 binds to NUP62 which may provide facilitated viral mRNA export and may compete with some host cell transport receptors for binding and inhibit cellular nucleocytoplasmic transport pathways. Also stimulates translation of viral transcripts. Repression of host gene expression blocks the cell cycle at the G1 phase and prevents apoptosis. Seems to silence the 3' splice site of the promyelocytic leukemia (PML) intron 7a, thereby switching PML isoforms from PML-II to PML-V. This could be linked to the accelerated mRNA export induced by ICP27 which might not provide sufficient time for PML pre-mRNA to be spliced in the nucleus. The sequence is that of mRNA export factor from Human herpesvirus 1 (strain HFEM) (HHV-1).